The chain runs to 198 residues: Ribosome maturation factor RimM (198 aa).

The interval 1–21 is disordered; sequence MPPPTASTPDDSADPGPDFAD. One can recognise a PRC barrel domain in the interval 122-195; that stretch reads DDELFADDLV…RIVVRPIDGL (74 aa).

Belongs to the RimM family. As to quaternary structure, binds ribosomal protein uS19.

The protein localises to the cytoplasm. In terms of biological role, an accessory protein needed during the final step in the assembly of 30S ribosomal subunit, possibly for assembly of the head region. Essential for efficient processing of 16S rRNA. May be needed both before and after RbfA during the maturation of 16S rRNA. It has affinity for free ribosomal 30S subunits but not for 70S ribosomes. The chain is Ribosome maturation factor RimM from Salinibacter ruber (strain DSM 13855 / M31).